Consider the following 444-residue polypeptide: UDP-N-acetylmuramate--L-alanine ligase (444 aa).

G111–S117 contributes to the ATP binding site.

The protein belongs to the MurCDEF family.

It localises to the cytoplasm. The catalysed reaction is UDP-N-acetyl-alpha-D-muramate + L-alanine + ATP = UDP-N-acetyl-alpha-D-muramoyl-L-alanine + ADP + phosphate + H(+). It participates in cell wall biogenesis; peptidoglycan biosynthesis. Functionally, cell wall formation. The protein is UDP-N-acetylmuramate--L-alanine ligase of Leuconostoc citreum (strain KM20).